A 419-amino-acid chain; its full sequence is Probable pectate lyase C (419 aa).

A signal peptide spans 1 to 19; the sequence is MRLTPSLISCLSLLHFTSA. 3 N-linked (GlcNAc...) asparagine glycosylation sites follow: Asn48, Asn164, and Asn201. Arg204 is a catalytic residue. An EF-hand domain is found at 261–296; sequence NENFHAYVETNYYDSDKDGTLNGSELGVDSTNYGGM. Residues Asp274, Asp276, Asp278, and Thr280 each coordinate Ca(2+). A glycan (N-linked (GlcNAc...) asparagine) is linked at Asn282. Position 285 (Glu285) interacts with Ca(2+). Residues 352–395 form a disordered region; it reads ISDEADMGGAGDLDQGTTPTDTDGDGIPDDAEAELGTDPNTADS. Residues 363–372 are compositionally biased toward low complexity; sequence DLDQGTTPTD. The span at 373–386 shows a compositional bias: acidic residues; sequence TDGDGIPDDAEAEL.

This sequence belongs to the polysaccharide lyase 1 family. The cofactor is Ca(2+).

The protein resides in the secreted. The enzyme catalyses Eliminative cleavage of (1-&gt;4)-alpha-D-galacturonan to give oligosaccharides with 4-deoxy-alpha-D-galact-4-enuronosyl groups at their non-reducing ends.. Its function is as follows. Pectinolytic enzyme consist of four classes of enzymes: pectin lyase, polygalacturonase, pectin methylesterase and rhamnogalacturonase. Among pectinolytic enzymes, pectin lyase is the most important in depolymerization of pectin, since it cleaves internal glycosidic bonds of highly methylated pectins. Favors pectate, the anion, over pectin, the methyl ester. This is Probable pectate lyase C (plyC) from Aspergillus oryzae (strain ATCC 42149 / RIB 40) (Yellow koji mold).